The chain runs to 347 residues: DnaJ homolog subfamily C member 22 (347 aa).

Residues 4-50 (GLLMTYTLWAVGGPAGLHHLYLGRDSHALLWMLTLGGGGLGWLWEFW) form the TM2 domain. The next 7 helical transmembrane spans lie at 5 to 25 (LLMTYTLWAVGGPAGLHHLYL), 32 to 52 (LLWMLTLGGGGLGWLWEFWML), 81 to 101 (FVAQMIVGMYFGLVALISLSF), 105 to 125 (FYIVGLPLAVGLGVLLVAAVG), 135 to 155 (LGAAFLTSPIFYGRPIAILPI), 186 to 206 (GLAYLAFTGPLVHSVLCHTAV), and 218 to 238 (FLSWFSFFPLLGRLLESVLLL). The J domain maps to 277 to 347 (LALQVFGLSE…GSWRWEETSF (71 aa)).

It localises to the membrane. May function as a co-chaperone. The protein is DnaJ homolog subfamily C member 22 (DNAJC22) of Bos taurus (Bovine).